Reading from the N-terminus, the 388-residue chain is Succinate--CoA ligase [ADP-forming] subunit beta (388 aa).

Positions 9–245 (KELLAGYGLP…KSQENERELK (237 aa)) constitute an ATP-grasp domain. Residues K46, 53-55 (GRG), E100, Y103, and E108 each bind ATP. Mg(2+) contacts are provided by N200 and D214. Substrate contacts are provided by residues N265 and 322-324 (GIV).

Belongs to the succinate/malate CoA ligase beta subunit family. Heterotetramer of two alpha and two beta subunits. It depends on Mg(2+) as a cofactor.

It carries out the reaction succinate + ATP + CoA = succinyl-CoA + ADP + phosphate. It catalyses the reaction GTP + succinate + CoA = succinyl-CoA + GDP + phosphate. It participates in carbohydrate metabolism; tricarboxylic acid cycle; succinate from succinyl-CoA (ligase route): step 1/1. Functionally, succinyl-CoA synthetase functions in the citric acid cycle (TCA), coupling the hydrolysis of succinyl-CoA to the synthesis of either ATP or GTP and thus represents the only step of substrate-level phosphorylation in the TCA. The beta subunit provides nucleotide specificity of the enzyme and binds the substrate succinate, while the binding sites for coenzyme A and phosphate are found in the alpha subunit. The protein is Succinate--CoA ligase [ADP-forming] subunit beta of Neisseria meningitidis serogroup C / serotype 2a (strain ATCC 700532 / DSM 15464 / FAM18).